The sequence spans 383 residues: Lipid-A-disaccharide synthase (383 aa).

The protein belongs to the LpxB family.

It catalyses the reaction 2-N,3-O-bis[(3R)-3-hydroxytetradecanoyl]-alpha-D-glucosaminyl 1-phosphate + UDP-2-N,3-O-bis[(3R)-3-hydroxytetradecanoyl]-alpha-D-glucosamine = lipid A disaccharide (E. coli) + UDP + H(+). The catalysed reaction is a lipid X + a UDP-2-N,3-O-bis[(3R)-3-hydroxyacyl]-alpha-D-glucosamine = a lipid A disaccharide + UDP + H(+). Its pathway is glycolipid biosynthesis; lipid IV(A) biosynthesis; lipid IV(A) from (3R)-3-hydroxytetradecanoyl-[acyl-carrier-protein] and UDP-N-acetyl-alpha-D-glucosamine: step 5/6. Its function is as follows. Condensation of UDP-2,3-diacylglucosamine and 2,3-diacylglucosamine-1-phosphate to form lipid A disaccharide, a precursor of lipid A, a phosphorylated glycolipid that anchors the lipopolysaccharide to the outer membrane of the cell. In Klebsiella pneumoniae subsp. pneumoniae (strain ATCC 700721 / MGH 78578), this protein is Lipid-A-disaccharide synthase.